Reading from the N-terminus, the 194-residue chain is RxLR effector protein Avh240 (194 aa).

Residues 1–23 (MRPYFTLLLALAFILACTNLVEA) form the signal peptide. The RxLR-dEER signature appears at 38 to 57 (RHLRTAVASVVDLPDDEDER). The host plasma membrane-binding stretch occupies residues 58–108 (LLGYNTVQLWRMRRTANKLMNGKLTTQKEAALKKWMASQQDKFLAKWLKSS).

Belongs to the RxLR effector family. In terms of assembly, homodimer. Interacts with host soybean aspartic protease AP1.

It localises to the secreted. The protein localises to the host cell membrane. In terms of biological role, effector that suppresses plant defense responses during the early stages of pathogen infection. Suppresses cell death induced by effectors and PAMPs in plant hosts. Avh240 dimerizes and localizes at the plasma membrane to interfere with aspartic protease AP1 secretion, which presents an effective mechanism by which effector proteins suppress plant apoplastic immunity. In Phytophthora sojae (Soybean stem and root rot agent), this protein is RxLR effector protein Avh240.